Reading from the N-terminus, the 326-residue chain is tRNA-modifying protein YgfZ (326 aa).

Residues Trp27 and Trp189 each contribute to the folate site.

The protein belongs to the tRNA-modifying YgfZ family.

The protein resides in the cytoplasm. Folate-binding protein involved in regulating the level of ATP-DnaA and in the modification of some tRNAs. It is probably a key factor in regulatory networks that act via tRNA modification, such as initiation of chromosomal replication. This chain is tRNA-modifying protein YgfZ, found in Shigella boydii serotype 4 (strain Sb227).